Reading from the N-terminus, the 155-residue chain is Low molecular weight phosphotyrosine protein phosphatase 1 (155 aa).

Cys9 (nucleophile) is an active-site residue. Arg15 is a catalytic residue. Asp124 serves as the catalytic Proton donor.

Belongs to the low molecular weight phosphotyrosine protein phosphatase family. Cone cells and primary pigment cells in developing pupal retina.

It localises to the cytoplasm. It carries out the reaction O-phospho-L-tyrosyl-[protein] + H2O = L-tyrosyl-[protein] + phosphate. The catalysed reaction is a phosphate monoester + H2O = an alcohol + phosphate. Its function is as follows. Acts on tyrosine phosphorylated proteins, low-MW aryl phosphates and natural and synthetic acyl phosphates. In Drosophila melanogaster (Fruit fly), this protein is Low molecular weight phosphotyrosine protein phosphatase 1 (primo-1).